The chain runs to 57 residues: COP9 signalosome complex subunit 9 (57 aa).

The protein belongs to the CSN9 family. As to quaternary structure, component of the CSN complex, probably composed of cops1, cops2, cops3, cops4, cops5, cops6, cops7, cops8 and cops9.

The protein localises to the nucleus. It is found in the cytoplasm. Its subcellular location is the nucleoplasm. Component of the COP9 signalosome complex (CSN), a complex involved in various cellular and developmental processes. The CSN complex is an essential regulator of the ubiquitin (Ubl) conjugation pathway by mediating the deneddylation of the cullin subunits of SCF-type E3 ligase complexes, leading to decrease the Ubl ligase activity. May play a role in cell proliferation. The sequence is that of COP9 signalosome complex subunit 9 from Danio rerio (Zebrafish).